Consider the following 440-residue polypeptide: Thymidine phosphorylase (440 aa).

It belongs to the thymidine/pyrimidine-nucleoside phosphorylase family. In terms of assembly, homodimer.

It carries out the reaction thymidine + phosphate = 2-deoxy-alpha-D-ribose 1-phosphate + thymine. It functions in the pathway pyrimidine metabolism; dTMP biosynthesis via salvage pathway; dTMP from thymine: step 1/2. Functionally, the enzymes which catalyze the reversible phosphorolysis of pyrimidine nucleosides are involved in the degradation of these compounds and in their utilization as carbon and energy sources, or in the rescue of pyrimidine bases for nucleotide synthesis. This chain is Thymidine phosphorylase, found in Escherichia coli (strain 55989 / EAEC).